The following is a 62-amino-acid chain: Large ribosomal subunit protein uL30 (62 aa).

Belongs to the universal ribosomal protein uL30 family. In terms of assembly, part of the 50S ribosomal subunit.

This is Large ribosomal subunit protein uL30 from Beutenbergia cavernae (strain ATCC BAA-8 / DSM 12333 / CCUG 43141 / JCM 11478 / NBRC 16432 / NCIMB 13614 / HKI 0122).